Consider the following 807-residue polypeptide: Glycerol-3-phosphate acyltransferase (807 aa).

The HXXXXD motif motif lies at C308 to M313.

This sequence belongs to the GPAT/DAPAT family.

The protein localises to the cell inner membrane. It catalyses the reaction sn-glycerol 3-phosphate + an acyl-CoA = a 1-acyl-sn-glycero-3-phosphate + CoA. Its pathway is phospholipid metabolism; CDP-diacylglycerol biosynthesis; CDP-diacylglycerol from sn-glycerol 3-phosphate: step 1/3. This Shewanella halifaxensis (strain HAW-EB4) protein is Glycerol-3-phosphate acyltransferase.